An 883-amino-acid polypeptide reads, in one-letter code: Lysine-specific demethylase JMJ29 (883 aa).

2 disordered regions span residues K30–K62 and R161–Q204. Residues S34–S43 are compositionally biased toward low complexity. 2 stretches are compositionally biased toward polar residues: residues R161–N172 and S184–Q204. Residues C209, C212, C223, C226, C232, C235, C252, C255, C338, C341, C363, and H381 each coordinate Zn(2+). The segment at C209 to R256 adopts an RING-type; degenerate zinc-finger fold. The segment at D333–G392 adopts a B box-type; atypical zinc-finger fold. The JmjC domain maps to P632–R863. Fe cation-binding residues include H676 and D678. Residues N713–E743 are disordered. Acidic residues predominate over residues D722–N735. The short motif at F755–K762 is the Nuclear localization signal element. H831 provides a ligand contact to Fe cation.

The protein belongs to the JARID1 histone demethylase family. Fe(2+) is required as a cofactor. As to expression, expressed in inflorescences, roots, siliques, leaves and stems.

It localises to the nucleus. Its function is as follows. May function as histone H3 lysine demethylase and be involved in regulation of gene expression. This is Lysine-specific demethylase JMJ29 from Arabidopsis thaliana (Mouse-ear cress).